Here is a 999-residue protein sequence, read N- to C-terminus: Collagen alpha-1(I) chain (999 aa).

A disordered region spans residues 1-999 (SYGYDEKSAG…PGPPGPPGPP (999 aa)). Allysine is present on Lys-7. Ser-8 is modified (phosphoserine). 11 positions are modified to 4-hydroxyproline: Pro-27, Pro-30, Pro-33, Pro-42, Pro-45, Pro-48, Pro-62, Pro-77, Pro-83, Pro-92, and Pro-98. Residues 65-79 (NGDDGEAGKPGRPGE) show a composition bias toward basic and acidic residues. Lys-101 carries the post-translational modification 5-hydroxylysine; alternate. The O-linked (Gal...) hydroxylysine; alternate glycan is linked to Lys-101. Phosphoserine is present on Ser-107. Low complexity predominate over residues 115–131 (DAGPAGPKGEPGSPGEN). Pro-125, Pro-128, Pro-134, Pro-143, Pro-149, Pro-170, Pro-179, Pro-182, Pro-209, Pro-212, Pro-224, Pro-230, Pro-239, Pro-245, Pro-248, and Pro-263 each carry 4-hydroxyproline. A compositionally biased stretch (low complexity) spans 149 to 167 (PGASGPAGARGNDGATGAA). The segment covering 169-181 (PPGPTGPAGPPGF) has biased composition (pro residues). The segment covering 215 to 254 (AGAAGPAGNPGADGQPGAKGANGAPGIAGAPGFPGARGPS) has biased composition (low complexity). Lys-266 carries the post-translational modification 5-hydroxylysine. 4-hydroxyproline occurs at positions 272, 275, 287, 296, 311, 317, 326, and 332. The span at 321–330 (GERGGPGSRG) shows a compositional bias: gly residues. Lys-341 is subject to 5-hydroxylysine. 4-hydroxyproline occurs at positions 350, 359, 365, 371, 380, 383, 392, 401, 407, 419, 429, 432, 450, 468, 474, 480, 486, 492, 498, 510, 526, 532, 538, and 547. Over residues 374-400 (KGLTGSPGSPGPDGKTGPPGPAGQDGR) the composition is skewed to low complexity. Over residues 462-489 (QGPAGSPGFQGLPGPAGPPGEAGKPGEQ) the composition is skewed to low complexity. A compositionally biased stretch (low complexity) spans 522 to 535 (APGAPGSQGAPGLQ). The residue at position 559 (Lys-559) is a 5-hydroxylysine. 4-hydroxyproline is present on residues Pro-565, Pro-580, and Pro-586. The segment covering 592–606 (SGPSGPAGPTGARGA) has biased composition (low complexity). At Ser-595 the chain carries Phosphoserine. 4-hydroxyproline occurs at positions 607, 613, 616, 625, 631, 649, 658, and 667. Low complexity predominate over residues 619 to 646 (AGFAGPPGADGQPGAKGEPGDAGAKGDA). A compositionally biased stretch (pro residues) spans 648–660 (PPGPAGPTGPPGP). 5-hydroxylysine is present on Lys-670. A compositionally biased stretch (low complexity) spans 675 to 691 (SAGPPGATGFPGAAGRV). 4-hydroxyproline is present on residues Pro-679 and Pro-685. A 3-hydroxyproline modification is found at Pro-693. A 4-hydroxyproline mark is found at Pro-694, Pro-703, Pro-706, Pro-727, Pro-736, Pro-745, Pro-754, Pro-772, Pro-781, Pro-784, Pro-790, Pro-805, Pro-811, Pro-817, Pro-826, and Pro-832. Low complexity predominate over residues 720 to 729 (ETGPAGRPGE). Residues 739-754 (SGEKGSPGADGPAGAP) are compositionally biased toward low complexity. The segment covering 804 to 814 (PPGPVGPPGLA) has biased composition (pro residues). Low complexity predominate over residues 816-831 (PPGESGREGSPGAEGS). Lys-841 is modified (5-hydroxylysine). A compositionally biased stretch (pro residues) spans 849–864 (PGPPGAPGAPGAPGPV). A 4-hydroxyproline mark is found at Pro-852, Pro-855, and Pro-858. Positions 885–899 (AGPAGARGPAGPQGP) are enriched in low complexity. A compositionally biased stretch (basic and acidic residues) spans 900-914 (RGDKGETGEQGDRGI). A 5-hydroxylysine modification is found at Lys-903. Lys-915 is subject to 5-hydroxylysine; alternate. Residue Lys-915 is glycosylated (O-linked (Gal...) hydroxylysine; alternate). 4 positions are modified to 4-hydroxyproline: Pro-930, Pro-933, Pro-951, and Pro-966. Residues 933–966 (PGEQGPSGASGPAGPRGPPGSAGSPGKDGLNGLP) show a composition bias toward low complexity. Pro-971 bears the 3-hydroxyproline mark. A 4-hydroxyproline modification is found at Pro-972. Residues 984–999 (VGPPGPPGPPGPPGPP) show a composition bias toward pro residues. 3-hydroxyproline is present on Pro-986. Residue Pro-987 is modified to 4-hydroxyproline. Pro-989 carries the post-translational modification 3-hydroxyproline. Pro-990 bears the 4-hydroxyproline mark. 3-hydroxyproline is present on Pro-992. Pro-993, Pro-996, and Pro-999 each carry 4-hydroxyproline.

This sequence belongs to the fibrillar collagen family. As to quaternary structure, trimers of one alpha 2(I) and two alpha 1(I) chains. In terms of processing, contains mostly 4-hydroxyproline. Proline residues at the third position of the tripeptide repeating unit (G-X-Y) are hydroxylated in some or all of the chains. Contains 3-hydroxyproline at a few sites. This modification occurs on the first proline residue in the sequence motif Gly-Pro-Hyp, where Hyp is 4-hydroxyproline. Post-translationally, lysine residues at the third position of the tripeptide repeating unit (G-X-Y) are 5-hydroxylated in some or all of the chains. In terms of processing, O-glycosylated on hydroxylated lysine residues. The O-linked glycan consists of a Glc-Gal disaccharide. As to expression, expressed in bones.

It is found in the secreted. Its subcellular location is the extracellular space. The protein localises to the extracellular matrix. In terms of biological role, type I collagen is a member of group I collagen (fibrillar forming collagen). In Choloepus hoffmanni (Hoffmann's two-fingered sloth), this protein is Collagen alpha-1(I) chain.